The chain runs to 235 residues: Centromere protein H (235 aa).

Residues 1 to 23 (MAGRLSESVGSGPGAEAETAADP) are disordered. A coiled-coil region spans residues 125 to 145 (EIIQAHQQARVIRENLNDIRR).

The protein belongs to the CENP-H/MCM16 family. Component of the CENPA-HI complex, at least composed of CENPH, CENPI, CENPK, CENPL, CENPM, CENPO and CENPP. Interacts with NDC80.

The protein localises to the nucleus. It is found in the chromosome. The protein resides in the centromere. It localises to the kinetochore. Its function is as follows. Component of the CENPA-HI complex, a centromeric complex involved in assembly of kinetochore proteins, mitotic progression and chromosome segregation. Required for the localization of CENPC but not CENPA to the centromere. It however may be involved in incorporation of newly synthesized CENPA into centromeres via its interaction with the CENPA-NAC complex. The polypeptide is Centromere protein H (CENPH) (Gallus gallus (Chicken)).